A 316-amino-acid polypeptide reads, in one-letter code: Biotin synthase (316 aa).

Residues 36 to 260 (NKIQISMLLN…LMPKSYIRLA (225 aa)) enclose the Radical SAM core domain. Residues Cys51, Cys55, and Cys58 each coordinate [4Fe-4S] cluster. [2Fe-2S] cluster contacts are provided by Cys95, Cys126, Cys186, and Arg258.

Belongs to the radical SAM superfamily. Biotin synthase family. In terms of assembly, homodimer. Requires [4Fe-4S] cluster as cofactor. [2Fe-2S] cluster is required as a cofactor.

The catalysed reaction is (4R,5S)-dethiobiotin + (sulfur carrier)-SH + 2 reduced [2Fe-2S]-[ferredoxin] + 2 S-adenosyl-L-methionine = (sulfur carrier)-H + biotin + 2 5'-deoxyadenosine + 2 L-methionine + 2 oxidized [2Fe-2S]-[ferredoxin]. Its pathway is cofactor biosynthesis; biotin biosynthesis; biotin from 7,8-diaminononanoate: step 2/2. Catalyzes the conversion of dethiobiotin (DTB) to biotin by the insertion of a sulfur atom into dethiobiotin via a radical-based mechanism. This Lawsonia intracellularis (strain PHE/MN1-00) protein is Biotin synthase.